A 474-amino-acid chain; its full sequence is ATP synthase subunit beta 2 (474 aa).

151 to 158 (GGAGVGKT) contacts ATP.

Belongs to the ATPase alpha/beta chains family. In terms of assembly, F-type ATPases have 2 components, CF(1) - the catalytic core - and CF(0) - the membrane proton channel. CF(1) has five subunits: alpha(3), beta(3), gamma(1), delta(1), epsilon(1). CF(0) has four main subunits: a(1), b(1), b'(1) and c(9-12).

It is found in the cell inner membrane. The catalysed reaction is ATP + H2O + 4 H(+)(in) = ADP + phosphate + 5 H(+)(out). In terms of biological role, produces ATP from ADP in the presence of a proton gradient across the membrane. The catalytic sites are hosted primarily by the beta subunits. The polypeptide is ATP synthase subunit beta 2 (Dinoroseobacter shibae (strain DSM 16493 / NCIMB 14021 / DFL 12)).